Here is a 297-residue protein sequence, read N- to C-terminus: Salivary glue protein Sgs-4 (297 aa).

A signal peptide spans 1–21 (MRLELLVVLLVGLAALAPSGS). 21 repeat units span residues 26-32 (TEPPRCE), 33-39 (TEPPRCE), 40-46 (TEPPRCE), 47-53 (TEPPRCE), 54-60 (TEPPRCE), 61-67 (TTTPKCE), 68-74 (TTPPTCR), 75-81 (TEPPTCK), 82-88 (TEPPTCR), 89-95 (TEPPTCK), 96-102 (TKPPTCR), 103-109 (TEPPTCR), 110-116 (TEPPTCK), 117-123 (TKPPTCK), 124-130 (TEPPTCK), 131-137 (TEPPTCR), 138-144 (TEPPTCK), 145-151 (TEPPTCR), 152-158 (TEPPTCK), 159-165 (TEPPTCK), and 166-172 (TEPPTCK). The segment at 26–84 (TEPPRCETEPPRCETEPPRCETEPPRCETEPPRCETTTPKCETTPPTCRTEPPTCKTEP) is disordered. The tract at residues 26–179 (TEPPRCETEP…TCKTEPPCEK (154 aa)) is 22 X 7 AA approximate tandem repeats of T-[ETK]-[PT]-P-[RKT]-C-[ERK]. Residues 27–58 (EPPRCETEPPRCETEPPRCETEPPRCETEPPR) are compositionally biased toward basic and acidic residues. A compositionally biased stretch (low complexity) spans 59-84 (CETTTPKCETTPPTCRTEPPTCKTEP). Positions 141–174 (PTCKTEPPTCRTEPPTCKTEPPTCKTEPPTCKTE) are enriched in low complexity. Disordered stretches follow at residues 141–218 (PTCK…SGCG) and 243–297 (PDSK…KGGC). A 22; approximate repeat occupies 173 to 179 (TEPPCEK). Basic residues-rich tracts occupy residues 181–208 (CTKR…HHNR) and 282–291 (NTTKKPRKTQ).

Salivary gland.

It is found in the secreted. This chain is Salivary glue protein Sgs-4 (Sgs4), found in Drosophila melanogaster (Fruit fly).